A 365-amino-acid polypeptide reads, in one-letter code: Terpene cyclase DEP1 (365 aa).

Helical transmembrane passes span leucine 10–phenylalanine 30, leucine 82–serine 102, alanine 116–tyrosine 136, leucine 158–phenylalanine 178, alanine 188–threonine 208, leucine 233–phenylalanine 253, leucine 297–leucine 317, and methionine 338–leucine 358.

It belongs to the membrane-bound ascI terpene cyclase family.

The protein localises to the membrane. It functions in the pathway polyketide biosynthesis. Functionally, part of the gene cluster that mediates the biosynthesis of depudecin, a highly oxidized eleven-carbon linear polyketide that acts as a histone deacetylase (HDAC) inhibitor and makes a small contribution to pathogenesis. The reducing polyketide synthase DEP5 is the central enzyme in depudecin biosynthesis by yielding the backbone polyketide chain. The monooxygenases DEP2 and DEP4, as well as the uncharacterized protein DEP1, then act as tailoring enzymes to modify the intermediate polyketide chain into depudecin. The chain is Terpene cyclase DEP1 from Fusarium langsethiae.